The chain runs to 432 residues: Isocitrate lyase (432 aa).

The segment at 1–24 (MSNVGKPRTAQEIQQDWDTNPRWN) is disordered. Positions 11–22 (QEIQQDWDTNPR) are enriched in polar residues. 93–95 (SGW) contributes to the substrate binding site. Mg(2+) is bound at residue aspartate 155. The active-site Proton acceptor is the cysteine 193. Substrate contacts are provided by residues 194-195 (GH), arginine 230, 315-319 (NCSPS), and threonine 349.

Belongs to the isocitrate lyase/PEP mutase superfamily. Isocitrate lyase family. As to quaternary structure, homotetramer. It depends on Mg(2+) as a cofactor.

The enzyme catalyses D-threo-isocitrate = glyoxylate + succinate. It participates in carbohydrate metabolism; glyoxylate cycle; (S)-malate from isocitrate: step 1/2. Inhibited by 3-phosphoglycerate, 6-phosphogluconate, phosphoenolpyruvate (PEP), fructose 1,6-bisphosphate, glycolate, oxalate, and itaconate. Involved in the metabolic adaptation in response to environmental changes. Catalyzes the reversible formation of succinate and glyoxylate from isocitrate, a key step of the glyoxylate cycle, which operates as an anaplerotic route for replenishing the tricarboxylic acid cycle during growth on fatty acid substrates. The protein is Isocitrate lyase of Corynebacterium glutamicum (strain ATCC 13032 / DSM 20300 / JCM 1318 / BCRC 11384 / CCUG 27702 / LMG 3730 / NBRC 12168 / NCIMB 10025 / NRRL B-2784 / 534).